The sequence spans 80 residues: UPF0125 protein XF_2346 (80 aa).

This sequence belongs to the UPF0125 (RnfH) family.

This is UPF0125 protein XF_2346 from Xylella fastidiosa (strain 9a5c).